The chain runs to 228 residues: HTH-type transcriptional activator FasR (228 aa).

Residues 1–39 form a disordered region; the sequence is MSDLAKTAQRRALRSSGSARPDEDVPAPNRRGNRLPRDE. The HTH tetR-type domain maps to 38–98; sequence DERRGQLLVV…AVLHRHVENL (61 aa). The segment at residues 61 to 80 is a DNA-binding region (H-T-H motif); that stretch reads GMDEIADRAGVSKPVLYQHF.

Homodimer.

With respect to regulation, fasR:DNA binding is regulated by long-chain acyl-CoAs (C14- to C26-CoA), which act as effector molecules that modulate the affinity of FasR for its DNA binding sequences and therefore modulate the expression of the essential fas-acpS operon. FasR activity is not affected by mycolic acid biosynthesis intermediates. Functionally, transcriptional activator that plays a central role in sensing mycobacterial long-chain fatty acids and regulating lipid biosynthesis. Activates the expression of the genes encoding the fatty acid synthase (fas) and the 4-phosphopantetheinyl transferase (acpS), whose products are involved in the fatty acid and mycolic acid biosynthesis. Specifically binds to three conserved operator sequences present in the fas-acpS promoter region. Not essential for M.tuberculosis viability, although it is required for the optimal growth in vitro and for virulence in macrophages and in a mouse model of infection. The polypeptide is HTH-type transcriptional activator FasR (Mycobacterium tuberculosis (strain ATCC 25618 / H37Rv)).